The following is a 306-amino-acid chain: Acetylglutamate kinase (306 aa).

Substrate-binding positions include 79 to 80 (GG), Arg101, and Asn203.

Belongs to the acetylglutamate kinase family. ArgB subfamily.

The protein localises to the cytoplasm. The catalysed reaction is N-acetyl-L-glutamate + ATP = N-acetyl-L-glutamyl 5-phosphate + ADP. It functions in the pathway amino-acid biosynthesis; L-arginine biosynthesis; N(2)-acetyl-L-ornithine from L-glutamate: step 2/4. Catalyzes the ATP-dependent phosphorylation of N-acetyl-L-glutamate. This is Acetylglutamate kinase from Polaromonas naphthalenivorans (strain CJ2).